A 200-amino-acid chain; its full sequence is Serine/threonine-protein kinase mos (200 aa).

The 199-residue stretch at 2 to 200 (LCLLQPLGSG…ELLKGERVTA (199 aa)) folds into the Protein kinase domain. ATP-binding positions include 8-16 (LGSGGFGSV) and K29. The active-site Proton acceptor is the D143.

The protein belongs to the protein kinase superfamily. Ser/Thr protein kinase family.

The enzyme catalyses L-seryl-[protein] + ATP = O-phospho-L-seryl-[protein] + ADP + H(+). The catalysed reaction is L-threonyl-[protein] + ATP = O-phospho-L-threonyl-[protein] + ADP + H(+). The protein is Serine/threonine-protein kinase mos (MOS) of Ciconia nigra (Black stork).